The sequence spans 411 residues: Probable tRNA pseudouridine synthase D (411 aa).

Catalysis depends on Asp-81, which acts as the Nucleophile. The TRUD domain maps to 154–375 (GTPNFFGLQR…SGSYRPADTL (222 aa)).

This sequence belongs to the pseudouridine synthase TruD family.

It catalyses the reaction uridine(13) in tRNA = pseudouridine(13) in tRNA. Could be responsible for synthesis of pseudouridine from uracil-13 in transfer RNAs. The protein is Probable tRNA pseudouridine synthase D of Archaeoglobus fulgidus (strain ATCC 49558 / DSM 4304 / JCM 9628 / NBRC 100126 / VC-16).